The chain runs to 287 residues: Mitochondrial glycine transporter B (287 aa).

Solcar repeat units lie at residues 7–97, 104–188, and 198–282; these read HPAL…LKQH, PSAG…AKKA, and IAPL…LMAR. The next 6 membrane-spanning stretches (helical) occupy residues 13-38, 72-98, 110-135, 163-186, 202-228, and 257-275; these read FMCG…TRLQ, GVSP…KQHY, VLLG…TRFE, GLTA…SQAK, VNFG…KTHM, and GAVP…AWTV.

Belongs to the mitochondrial carrier (TC 2.A.29) family. SLC25A38 subfamily. As to expression, at 24 hours post-fertilization, expressed predominantly in posterior blood island, posterior cardinal vein and circulating blood. At 34 hours post-fertilization, becomes restricted to posterior blood island and circulating blood.

It is found in the mitochondrion inner membrane. The enzyme catalyses glycine(in) = glycine(out). Its function is as follows. Mitochondrial glycine transporter that imports glycine into the mitochondrial matrix. Plays an important role in providing glycine for the first enzymatic step in heme biosynthesis, the condensation of glycine with succinyl-CoA to produce 5-aminolevulinate (ALA) in the mitochondrial matrix. Required during erythropoiesis. In terms of biological role, may play a role as pro-apoptotic protein that induces caspase-dependent apoptosis. In Danio rerio (Zebrafish), this protein is Mitochondrial glycine transporter B (slc25a38b).